The following is a 171-amino-acid chain: MSVSFRDRVLKLYLLGFDPSEIAQTLSLDAKRKVTEEEVLHVLAEARELLSALPSLEDIRAEVGQALERARIFQKDLLAIYQNMLRNYNAMMEGLTEHPDGTPVIGVRPADIAAMADRIMKIDQERITALLNSLKVLGHVGSTTAGALPSATELVRVEELVAEVVDEAPKT.

This sequence belongs to the P23virus small terminase family. Homononamer; forms a ring-like structure through which genomic DNA is translocated into the capsid. Heterodimer with the terminase large subunit; the active complex is probably heterooligomeric.

Functionally, the terminase small subunit binds to the packaging initiation site and regulates the ATPase activity of the terminase large subunit. The terminase lies at a unique vertex of the procapsid and is composed of two subunits, a small terminase subunit involved in viral DNA recognition (packaging sequence), and a large terminase subunit. Both terminase subunits heterooligomerize and are docked on the portal protein to form the packaging machine. This is Terminase, small subunit from Thermus virus P23-45 (Thermus thermophilus phage P23-45).